The primary structure comprises 208 residues: Large ribosomal subunit protein uL4 (208 aa).

Positions 45-89 (RQGTHAHKNRSAVSGGGKKPWRQKGTGRARQGSTRSPQWRGGGTV) are disordered.

The protein belongs to the universal ribosomal protein uL4 family. As to quaternary structure, part of the 50S ribosomal subunit.

Its function is as follows. One of the primary rRNA binding proteins, this protein initially binds near the 5'-end of the 23S rRNA. It is important during the early stages of 50S assembly. It makes multiple contacts with different domains of the 23S rRNA in the assembled 50S subunit and ribosome. Forms part of the polypeptide exit tunnel. The chain is Large ribosomal subunit protein uL4 from Lactococcus lactis subsp. lactis (strain IL1403) (Streptococcus lactis).